The primary structure comprises 274 residues: Protein FAM210A (274 aa).

A compositionally biased stretch (polar residues) spans 51-66; the sequence is KWLHSQPKQQDSSTKT. The interval 51–91 is disordered; the sequence is KWLHSQPKQQDSSTKTPVHDLPSGSQHQSEESSPSAKSSIS. Low complexity predominate over residues 81–91; sequence ESSPSAKSSIS. The DUF1279 domain occupies 105–217; it reads DQSIGLLKRF…GYLSTPPLVK (113 aa). A helical membrane pass occupies residues 124-144; the sequence is VLIPVHLVTSSFWFGSFYYAA. Positions 221–274 form a coiled coil; sequence QDRMEETKELFTEKMEETRDIISGKMEETKDRISEKLQETKDRVAFRKKKNEEM.

The protein belongs to the FAM210 family.

The protein localises to the membrane. The protein resides in the mitochondrion. It is found in the cytoplasm. Functionally, may play a role in the structure and strength of both muscle and bone. The chain is Protein FAM210A (fam210a) from Xenopus tropicalis (Western clawed frog).